The chain runs to 387 residues: MADQANQPTVLHKLGGQFHLSSSFSEGVRARNICPSFSPYERRFATRNYMTQSLWGPSMSVSGGINVPVMPTPLFANAPAEKGGKNFMIDFMMGGVSAAVSKTAAAPIERVKLLIQNQDEMIKSGRLSEPYKGIADCFKRTIKDEGFSSLWRGNTANVIRYFPTQALNFAFKDYFKRLFNFKKDRDGYWKWFAGNLASGGAAGASSLFFVYSLDYARTRLANDAKAAKGGGDRQFNGLVDVYRKTLKSDGIAGLYRGFNISCVGIIVYRGLYFGLYDSIKPVVLTGSLQDNFFASFALGWLITNGAGLASYPIDTVRRRMMMTSGEAVKYKSSLDAFQQILKKEGPKSLFKGAGANILRAIAGAGVLSGYDQLQILFFGKKYGSGGA.

The N-terminal 77 residues, 1-77 (MADQANQPTV…PVMPTPLFAN (77 aa)), are a transit peptide targeting the mitochondrion. Solcar repeat units follow at residues 85–178 (KNFM…FKRL), 190–282 (KWFA…IKPV), and 290–376 (DNFF…LQIL). Helical transmembrane passes span 87–114 (FMIDFMMGGVSAAVSKTAAAPIERVKLL), 155–179 (TANVIRYFPTQALNFAFKDYFKRLF), 188–208 (YWKWFAGNLASGGAAGASSLF), 258–279 (FNISCVGIIVYRGLYFGLYDSI), and 293–313 (FASFALGWLITNGAGLASYPI). ADP-binding residues include arginine 160 and lysine 172. Arginine 317 serves as a coordination point for ADP. The segment at 317 to 322 (RRRMMM) is important for transport activity. A Nucleotide carrier signature motif motif is present at residues 317–322 (RRRMMM). A helical transmembrane segment spans residues 353 to 373 (AGANILRAIAGAGVLSGYDQL).

Belongs to the mitochondrial carrier (TC 2.A.29) family. As to quaternary structure, monomer.

The protein localises to the mitochondrion inner membrane. It catalyses the reaction ADP(in) + ATP(out) = ADP(out) + ATP(in). Its activity is regulated as follows. The matrix-open state (m-state) is inhibited by the membrane-permeable bongkrekic acid (BKA). The cytoplasmic-open state (c-state) is inhibited by the membrane-impermeable toxic inhibitor carboxyatractyloside (CATR). Functionally, ADP:ATP antiporter that mediates import of ADP into the mitochondrial matrix for ATP synthesis, and export of ATP out to fuel the cell. Cycles between the cytoplasmic-open state (c-state) and the matrix-open state (m-state): operates by the alternating access mechanism with a single substrate-binding site intermittently exposed to either the cytosolic (c-state) or matrix (m-state) side of the inner mitochondrial membrane. The sequence is that of ADP,ATP carrier protein 2, mitochondrial (ANT2) from Zea mays (Maize).